We begin with the raw amino-acid sequence, 244 residues long: Phosphoadenosine 5'-phosphosulfate reductase (244 aa).

C239 (nucleophile; cysteine thiosulfonate intermediate) is an active-site residue.

This sequence belongs to the PAPS reductase family. CysH subfamily.

The protein resides in the cytoplasm. The catalysed reaction is [thioredoxin]-disulfide + sulfite + adenosine 3',5'-bisphosphate + 2 H(+) = [thioredoxin]-dithiol + 3'-phosphoadenylyl sulfate. It functions in the pathway sulfur metabolism; hydrogen sulfide biosynthesis; sulfite from sulfate: step 3/3. Functionally, catalyzes the formation of sulfite from phosphoadenosine 5'-phosphosulfate (PAPS) using thioredoxin as an electron donor. The chain is Phosphoadenosine 5'-phosphosulfate reductase from Pectobacterium carotovorum subsp. carotovorum (strain PC1).